The following is a 152-amino-acid chain: MFRGATLVNLDSKGRLSVPTRYRDQLIENATGQMVCTIDIHHPCLLLYPLPEWEIIEQKLSRLSSMNPVERRVQRLLLGHASECQMDSAGRLLIAPILRQHAGLTKEVMLVGQFNKFELWDETTWYQQVKEDIDAEQSVTETLSERLQDLSL.

SpoVT-AbrB domains are found at residues 5 to 52 (ATLV…PLPE) and 81 to 124 (ASEC…DETT).

The protein belongs to the MraZ family. In terms of assembly, forms oligomers.

It localises to the cytoplasm. The protein localises to the nucleoid. Its function is as follows. Negatively regulates its own expression and that of the subsequent genes in the proximal part of the division and cell wall (dcw) gene cluster. Acts by binding directly to DNA. May also regulate the expression of genes outside the dcw cluster. The sequence is that of Transcriptional regulator MraZ from Citrobacter koseri (strain ATCC BAA-895 / CDC 4225-83 / SGSC4696).